The following is a 100-amino-acid chain: Urease subunit gamma (100 aa).

It belongs to the urease gamma subunit family. Heterotrimer of UreA (gamma), UreB (beta) and UreC (alpha) subunits. Three heterotrimers associate to form the active enzyme.

It localises to the cytoplasm. It carries out the reaction urea + 2 H2O + H(+) = hydrogencarbonate + 2 NH4(+). The protein operates within nitrogen metabolism; urea degradation; CO(2) and NH(3) from urea (urease route): step 1/1. In Pseudomonas putida (strain ATCC 700007 / DSM 6899 / JCM 31910 / BCRC 17059 / LMG 24140 / F1), this protein is Urease subunit gamma.